Here is a 104-residue protein sequence, read N- to C-terminus: Large ribosomal subunit protein bL21 (104 aa).

This sequence belongs to the bacterial ribosomal protein bL21 family. Part of the 50S ribosomal subunit. Contacts protein L20.

Its function is as follows. This protein binds to 23S rRNA in the presence of protein L20. This chain is Large ribosomal subunit protein bL21, found in Leptospira borgpetersenii serovar Hardjo-bovis (strain JB197).